The sequence spans 296 residues: Light-independent protochlorophyllide reductase iron-sulfur ATP-binding protein (296 aa).

Residues 10–15 (GIGKST) and Lys39 contribute to the ATP site. Residue Ser14 coordinates Mg(2+). Positions 95 and 129 each coordinate [4Fe-4S] cluster. An ATP-binding site is contributed by 180–181 (NR).

Belongs to the NifH/BchL/ChlL family. Homodimer. Protochlorophyllide reductase is composed of three subunits; ChlL, ChlN and ChlB. [4Fe-4S] cluster serves as cofactor.

The protein resides in the plastid. It localises to the chloroplast. It carries out the reaction chlorophyllide a + oxidized 2[4Fe-4S]-[ferredoxin] + 2 ADP + 2 phosphate = protochlorophyllide a + reduced 2[4Fe-4S]-[ferredoxin] + 2 ATP + 2 H2O. Its pathway is porphyrin-containing compound metabolism; chlorophyll biosynthesis (light-independent). Component of the dark-operative protochlorophyllide reductase (DPOR) that uses Mg-ATP and reduced ferredoxin to reduce ring D of protochlorophyllide (Pchlide) to form chlorophyllide a (Chlide). This reaction is light-independent. The L component serves as a unique electron donor to the NB-component of the complex, and binds Mg-ATP. This Chlorokybus atmophyticus (Soil alga) protein is Light-independent protochlorophyllide reductase iron-sulfur ATP-binding protein.